A 505-amino-acid polypeptide reads, in one-letter code: 6-phosphofructo-2-kinase/fructose-2,6-bisphosphatase 2 (505 aa).

Residues 1 to 20 (MSGASSSEQNNNSYETKTPN) are disordered. Residue S2 is modified to N-acetylserine. The segment at 2 to 248 (SGASSSEQNN…VYYLMNIHVQ (247 aa)) is 6-phosphofructo-2-kinase. A Phosphoserine; by PKA modification is found at S29. 45–53 (GLPARGKTY) provides a ligand contact to ATP. Beta-D-fructose 6-phosphate is bound by residues R78 and R102. The active site involves D128. 2 residues coordinate beta-D-fructose 6-phosphate: T130 and R136. C158 is a catalytic residue. Residue 167–172 (NILEVK) participates in ATP binding. The beta-D-fructose 6-phosphate site is built by K172, R193, and Y197. Residues 249 to 505 (PRTIYLCRHG…RAQDMQEGAD (257 aa)) are fructose-2,6-bisphosphatase. R256 provides a ligand contact to beta-D-fructose 2,6-bisphosphate. The active-site Tele-phosphohistidine intermediate is the H257. 2 residues coordinate beta-D-fructose 2,6-bisphosphate: N263 and G269. The active-site Proton donor/acceptor is the E326. Positions 337, 351, 355, 366, 392, and 396 each coordinate beta-D-fructose 2,6-bisphosphate. 348 to 351 (FALR) is an ATP binding site. Residues 392–396 (QAVMR) and Y428 contribute to the ATP site. The segment at 445 to 505 (HRDKPTNNFP…RAQDMQEGAD (61 aa)) is disordered. Residues 450–476 (TNNFPKNQTPVRMRRNSFTPLSSSNTI) show a composition bias toward polar residues. At S466 the chain carries Phosphoserine; by AMPK. A phosphothreonine mark is found at T468 and T475. Residue S483 is modified to Phosphoserine; by BRAF. 2 positions are modified to phosphoserine: S486 and S493.

This sequence in the C-terminal section; belongs to the phosphoglycerate mutase family. Homodimer. Forms a heterodimer with PFKFB3. Phosphorylation by AMPK stimulates activity. As to expression, heart.

The catalysed reaction is beta-D-fructose 2,6-bisphosphate + H2O = beta-D-fructose 6-phosphate + phosphate. The enzyme catalyses beta-D-fructose 6-phosphate + ATP = beta-D-fructose 2,6-bisphosphate + ADP + H(+). Phosphorylation results in the activation of the kinase activity. In terms of biological role, synthesis and degradation of fructose 2,6-bisphosphate. The sequence is that of 6-phosphofructo-2-kinase/fructose-2,6-bisphosphatase 2 from Homo sapiens (Human).